A 394-amino-acid polypeptide reads, in one-letter code: Olfactomedin-like protein 3B (394 aa).

The signal sequence occupies residues 1 to 18 (MKATIFFLLLTVLAHSRS). A coiled-coil region spans residues 29-94 (LENRMLAMEE…RVDRVEREMD (66 aa)). Residues 132–383 (VCVNIISSLK…QILYKLELKK (252 aa)) enclose the Olfactomedin-like domain. Cys-133 and Cys-310 form a disulfide bridge. Asn-169, Asn-204, and Asn-233 each carry an N-linked (GlcNAc...) asparagine glycan.

The protein belongs to the OLFML3 family.

The protein resides in the secreted. Functionally, secreted scaffold protein that plays an essential role in dorsoventral patterning during early development. Stabilizes axial formation by restricting chordin (CHRD) activity on the dorsal side. Acts by facilitating the association between the tolloid proteases and their substrate chordin (CHRD), leading to enhance chordin (CHRD) degradation. In Danio rerio (Zebrafish), this protein is Olfactomedin-like protein 3B (olfml3b).